Reading from the N-terminus, the 1093-residue chain is Synaptopodin-2 (1093 aa).

The tract at residues 1-180 (MGTGDFICIS…PDSQRGRVAE (180 aa)) is interaction with VPS18. In terms of domain architecture, PDZ spans 6-88 (FICISMTGGA…SLQMLIKRPS (83 aa)). Disordered regions lie at residues 144 to 174 (ENQR…PDSQ) and 211 to 233 (ASGP…DPNL). Positions 222-233 (EKSKSPDPDPNL) are enriched in basic and acidic residues. A phosphoserine mark is found at serine 274, serine 310, serine 329, and serine 330. The segment at 329–369 (SSEGTEQGEDPRSEKDHSRPHKHRARHARLRRSESLSEKQV) is disordered. Threonine 333 is subject to Phosphothreonine. Basic residues predominate over residues 346 to 358 (SRPHKHRARHARL). Positions 359-369 (RRSESLSEKQV) are enriched in basic and acidic residues. The Nuclear localization signal motif lies at 398-406 (KKRRRRARK). Interaction with ACTN2 stretches follow at residues 481 to 663 (MEML…FYDS), 664 to 924 (SERI…PPVA), and 901 to 1093 (QSPT…VVEE). Disordered stretches follow at residues 507–803 (AQKE…GTVV) and 834–870 (AVAS…GMSG). F-actin binding stretches follow at residues 534–663 (TSYQ…FYDS) and 664–803 (SERI…GTVV). 3 positions are modified to phosphoserine: serine 548, serine 549, and serine 551. Polar residues-rich tracts occupy residues 565-579 (PQQN…TANI) and 595-611 (SVNQ…NMTS). The residue at position 604 (serine 604) is a Phosphoserine. The interval 607 to 811 (RNMTSPIADF…VVSSIKIAQP (205 aa)) is interaction with YWHAB. Phosphothreonine is present on threonine 610. Serine 611 is modified (phosphoserine). The interval 615-626 (DFPAPPPYSAVT) is interaction with BAG3. 2 stretches are compositionally biased toward pro residues: residues 617-630 (PAPP…PPPD) and 644-655 (AQPPPWPQPAPW). The PPPY motif signature appears at 619–622 (PPPY). Position 622 is a phosphotyrosine (tyrosine 622). Threonine 626 carries the phosphothreonine modification. A compositionally biased stretch (basic and acidic residues) spans 663–674 (SSERIASRDERI). The F-actin bundling activity stretch occupies residues 664-916 (SERIASRDER…LPASWKYSSN (253 aa)). Phosphoserine is present on residues serine 705 and serine 729. The actin binding stretch occupies residues 751–900 (AKQKTPPPVA…DTVQAHAARA (150 aa)). Phosphothreonine is present on residues threonine 755 and threonine 774. The segment covering 762–784 (KPAVKSSSSQPVTPVSPVWSPGV) has biased composition (low complexity). Phosphoserine is present on residues serine 777 and serine 781. Composition is skewed to polar residues over residues 793 to 803 (PTSNPSKGTVV) and 835 to 853 (VASQ…TVNA). Residues 810–1093 (QPSYPPARPA…QVWKPSVVEE (284 aa)) are interaction with FLNC. Serine 902, serine 906, and serine 910 each carry phosphoserine. Residues 937–956 (ALKSQPSAAQPSKMGKKKGK) form a disordered region. Residues 1000–1019 (LAMKQALPPRPVNAASPTNV) form an interaction with ZYX region. A Phosphoserine modification is found at serine 1015. Residues 1041–1050 (SSPVSASPVP) are compositionally biased toward low complexity. A disordered region spans residues 1041 to 1064 (SSPVSASPVPVGIPTSPKQESASS). Position 1056 is a phosphoserine (serine 1056).

The protein belongs to the synaptopodin family. In terms of assembly, may self-associate in muscle cells under oxidative stress. Binds F-actin. Interacts with ACTN2; ACTN2 is proposed to anchor SYOP2 at Z lines in mature myocytes. Interacts with AKAP6, PPP3CA and CAMK2A. Interacts (phosphorylated form) with YWHAB; YWHAB competes with ACTN2 for interaction with SYNPO2. Interacts with KPNA2; mediating nuclear import of SYNOP2; dependent on interaction with YWHAB. Interacts with IPO13; may be implicated in SYNOP2 nuclear import. Interacts with ZYX, FLNC, ILK. Interacts with BAG3 (via WW 1 domain). May associate with the CASA complex consisting of HSPA8, HSPB8 and BAG3. Interacts with VPS18. Phosphorylated by PKA, and by CaMK2 at multiple sites. Dephosphorylated by calcineurin; abrogating interaction with YWHAB and impairing nuclear import. Phosphorylated by ILK. In terms of tissue distribution, expressed in heart muscle. Isoform 5 is specifically expressed in skeletal muscle.

Its subcellular location is the nucleus. It localises to the cytoplasm. The protein resides in the cytoskeleton. The protein localises to the myofibril. It is found in the sarcomere. Its subcellular location is the z line. It localises to the cell junction. The protein resides in the focal adhesion. Functionally, has an actin-binding and actin-bundling activity. Can induce the formation of F-actin networks in an isoform-specific manner. At the sarcomeric Z lines is proposed to act as adapter protein that links nascent myofibers to the sarcolemma via ZYX and may play a role in early assembly and stabilization of the Z lines. Involved in autophagosome formation. May play a role in chaperone-assisted selective autophagy (CASA) involved in Z lines maintenance in striated muscle under mechanical tension; may link the client-processing CASA chaperone machinery to a membrane-tethering and fusion complex providing autophagosome membranes. Involved in regulation of cell migration. May be a tumor suppressor. Its function is as follows. Involved in regulation of cell migration. Can induce formation of thick, irregular actin bundles in the cell body. In terms of biological role, involved in regulation of cell migration. Can induce long, well-organized actin bundles frequently orientated in parallel along the long axis of the cell showing characteristics of contractile ventral stress fibers. Involved in regulation of cell migration. Can induce an amorphous actin meshwork throughout the cell body containing a mixture of long and short, randomly organized thick and thin actin bundles. Functionally, can induce long, well-organized actin bundles frequently orientated in parallel along the long axis of the cell showing characteristics of contractile ventral stress fibers. Its function is as follows. Involved in regulation of cell migration in part dependent on the Rho-ROCK cascade; can promote formation of nascent focal adhesions, actin bundles at the leading cell edge and lamellipodia. Can induce formation of thick, irregular actin bundles in the cell body; the induced actin network is associated with enhanced cell migration in vitro. This is Synaptopodin-2 (SYNPO2) from Homo sapiens (Human).